Here is a 122-residue protein sequence, read N- to C-terminus: Large ribosomal subunit protein uL22 (122 aa).

The protein belongs to the universal ribosomal protein uL22 family. In terms of assembly, part of the 50S ribosomal subunit.

Functionally, this protein binds specifically to 23S rRNA; its binding is stimulated by other ribosomal proteins, e.g. L4, L17, and L20. It is important during the early stages of 50S assembly. It makes multiple contacts with different domains of the 23S rRNA in the assembled 50S subunit and ribosome. The globular domain of the protein is located near the polypeptide exit tunnel on the outside of the subunit, while an extended beta-hairpin is found that lines the wall of the exit tunnel in the center of the 70S ribosome. The polypeptide is Large ribosomal subunit protein uL22 (Caldicellulosiruptor saccharolyticus (strain ATCC 43494 / DSM 8903 / Tp8T 6331)).